A 158-amino-acid chain; its full sequence is Glutathione peroxidase homolog BsaA (158 aa).

Residue Thr36 is part of the active site.

This sequence belongs to the glutathione peroxidase family.

The protein is Glutathione peroxidase homolog BsaA (bsaA) of Staphylococcus epidermidis (strain ATCC 35984 / DSM 28319 / BCRC 17069 / CCUG 31568 / BM 3577 / RP62A).